Here is a 118-residue protein sequence, read N- to C-terminus: Ribosome-binding factor A (118 aa).

It belongs to the RbfA family. Monomer. Binds 30S ribosomal subunits, but not 50S ribosomal subunits or 70S ribosomes.

It is found in the cytoplasm. In terms of biological role, one of several proteins that assist in the late maturation steps of the functional core of the 30S ribosomal subunit. Associates with free 30S ribosomal subunits (but not with 30S subunits that are part of 70S ribosomes or polysomes). Required for efficient processing of 16S rRNA. May interact with the 5'-terminal helix region of 16S rRNA. This Latilactobacillus sakei subsp. sakei (strain 23K) (Lactobacillus sakei subsp. sakei) protein is Ribosome-binding factor A.